We begin with the raw amino-acid sequence, 1942 residues long: MGNSYAGQLKSARFEEALHNSIEASLRSSGGDPQPVFTQLYLEPDQYSGHVEDIKPKMDLSLRSDPSTHVLVKCHSSNSVEDMDDEDDSDTSSPPLPYLQGPPPDGCCTVDGFCQAGKDLRLVSMATESIEVPAGFELVGAKSPSIPEHILVCAVDKRFLPDENGKNALLGFSGNCVGCGEKGFRYFTEFSNHINLKLSTQPKKQKHLKYYLVKNSQGALCKGALICWKDCKTRPFSNSASSSKPSSSSSLSSKENGDTNGHSPSPFPLSDSPPARMQSGSSSGIFGPQELGFLKPLNTPTHGTKTLPIVPTALRVNGLTNGLSMDGRSTLLSPPRTNPLSTPSHGYRTTETGDSPASTAMSTGPPKKRHRSWHPTTLVPIPATAVPVPAIRPLTCSSGPLLSLSNQQPASVSGVIQPQPITAGETVIIPDNLLNSYGVRPVLLIGQGTLPYFFGNVGDLVVSPLLVSCYKGRELNEKTLASLGMSANQLLTTETMILLTLQYLARLGTEQIPLREEFEQIMLKAMLCGPTGPPVSPAQLPWLARMEASVSGGSVQVLVTHGSLGEGISESLRSLSETSPQQQQCLPNYVLIICTSKSGANEFCVLVLGKYQSRALAESMLSTNEFLKEISYELITGKVSVLASHFQSTSLGDNMDKQLVRYQRKRKDRVVQPFQGHLTEYIHSQEAATMIPESGPDLLSDDFQIHPPQLSVARSLLSQVCAIADSGSQSLDLGRFCKVDFLILVPPSHVLVHQTVQRIRQSGVLIDLGIEDVSLAMQKSDKYVVRLDTEVHTKMEAFMRKVKQNPYTLFVLIHDNSHVDLTSALSGSVCHGELQGLADRVVNCPEVLEAINLLVLQVSCFPFTLQSRQSRISTQNEVHWPDTENQQGEASPKDLIYFGLKDYSKSLQWGVASPILRCDDAFERMVKTLLERHPHLHSMVIRSYLLIQQYTEALMALTAAPSLRDHVTPQTLAMVEDLLSVPGRSKHGCGHMLLVRVPSLQLARLAQERLEEARDKLGLQYRFAVLLGSPAAEISLPVHFCARLRAWRGCKNEEWVPHTYEDLEGLPCIVILTGKDPLGETFPRSLKYCDLRLIDSSYLTRTALEQEVGLACSYVTRRVIPKTKTATSREERPREGERSSGETAEHDDLPMELERPPSNASAATRTSGSTTENGVSSSSILDKPSSQSDPCGSRTMMDSCSSPVRFKQECDSQAPSSSSTSSFSSASSSSSSSSSPAAQRPSQSTQAPRECNRTQVFPRTAVLSRAAYTLLAPETLGHPSSASLLPHADVSWSSPLRPPVPHGLGGAEQSLYYRQWTTARQHHADYEGPVPHPHPRRLLLSGPPQVGKTGAYLQFLRILFRMLIRLLEVDVYDEEELEEDVQDKSKVPPSSGPQWPDVEDVRKLRFDLCPHDCKFKYSSPVYANRMPKTQSGVKTERLDTEADPPKRNTVSVRLSLFAAHNAFHHCEQCHHYSEPIPAAQLSDCTFHAFTFCSSMLGEEVQLHFIIPKSKESHFVFSQQGSHLESMRLPLLSDKESGMMKSPIFTPTTGRQEHGLLNIYHAMEGAEHLHILVVKQYEMPLYRKYWPNHILLVLPAMFNNSGVGAARFMIKELSYHNLELERNRQEEQGVKRQDVWPFIVMMDDSCVLWNAQQPGPDGKTEVMNVSLKSVLQHMEATPKISQYAVCGLRKWSSSLSSQAPTSPFSRCHLHDLILLNVDLTQNVQYDLNRFTCEEVDFNLRANSSGLLLCRFNQFSIMKKHIPIGGHKDFLIKPKLMRIETPVRVCASQYVCAPDSEQTLLAAPAQFLLEKFLQSCSHRLFPLALSNSANPVLSIDSYLNLGPEVQVCYVSSRPHSVNVDHQGVIFSGLLLYLCDSFVVSSLLKKFNFLKGATLCVICQDRSSLRQTIVRLELEDEWQFRLRDEFQTANCSEDRPLYFLTGRHI.

Disordered regions lie at residues 76–101 (SSNSVEDMDDEDDSDTSSPPLPYLQG), 235–306 (PFSN…GTKT), 325–373 (MDGR…HRSW), and 1123–1256 (TKTA…RTQV). The segment covering 81-90 (EDMDDEDDSD) has biased composition (acidic residues). Positions 237–253 (SNSASSSKPSSSSSLSS) are enriched in low complexity. Positions 338–362 (NPLSTPSHGYRTTETGDSPASTAMS) are enriched in polar residues. Residues 1127–1155 (TSREERPREGERSSGETAEHDDLPMELER) are compositionally biased toward basic and acidic residues. The segment covering 1158–1171 (SNASAATRTSGSTT) has biased composition (low complexity). Polar residues predominate over residues 1172–1202 (ENGVSSSSILDKPSSQSDPCGSRTMMDSCSS). Residues 1212–1248 (SQAPSSSSTSSFSSASSSSSSSSSPAAQRPSQSTQAP) are compositionally biased toward low complexity. A helical membrane pass occupies residues 1861–1881 (GVIFSGLLLYLCDSFVVSSLL).

Belongs to the GREB1 family.

It is found in the membrane. Plays a major role in early metanephros development. This Danio rerio (Zebrafish) protein is GREB1-like protein (greb1l).